We begin with the raw amino-acid sequence, 145 residues long: D-aminoacyl-tRNA deacylase (145 aa).

The Gly-cisPro motif, important for rejection of L-amino acids signature appears at 137–138 (GP).

This sequence belongs to the DTD family. As to quaternary structure, homodimer.

It is found in the cytoplasm. It carries out the reaction glycyl-tRNA(Ala) + H2O = tRNA(Ala) + glycine + H(+). The catalysed reaction is a D-aminoacyl-tRNA + H2O = a tRNA + a D-alpha-amino acid + H(+). Its function is as follows. An aminoacyl-tRNA editing enzyme that deacylates mischarged D-aminoacyl-tRNAs. Also deacylates mischarged glycyl-tRNA(Ala), protecting cells against glycine mischarging by AlaRS. Acts via tRNA-based rather than protein-based catalysis; rejects L-amino acids rather than detecting D-amino acids in the active site. By recycling D-aminoacyl-tRNA to D-amino acids and free tRNA molecules, this enzyme counteracts the toxicity associated with the formation of D-aminoacyl-tRNA entities in vivo and helps enforce protein L-homochirality. This Aeromonas hydrophila subsp. hydrophila (strain ATCC 7966 / DSM 30187 / BCRC 13018 / CCUG 14551 / JCM 1027 / KCTC 2358 / NCIMB 9240 / NCTC 8049) protein is D-aminoacyl-tRNA deacylase.